A 289-amino-acid chain; its full sequence is MSEDRRSPTDEAPREGELPRSPGDNFRIALPNFEGPLDLLLHLIKEHRVDIFDIPLALITEKYLEHLERMREINLDIAGEFLVMASTLAHLKSRMLLPRQDVASAQEGAEVLAVAEETEDPRAELVRRLLEYQKYKDAAEQLATQDLLGRDVFARNVPVEAVPIPEEEVGLQEFSVLKLVEALDRVLERLQPKLQHEVVRERVTLSEAILRVVERLRPHGQVLFESLFTEEETPSRQEVVITFLAILEMVKRRLIRVVQDEPLGPILLLPNGDALEKLAPTEVDDSDYR.

A compositionally biased stretch (basic and acidic residues) spans M1–L18. Residues M1–D24 form a disordered region.

This sequence belongs to the ScpA family. Component of the Structural Maintenance of Chromosome (SMC) condensin-like complex composed of ScpA, ScpB and the Smc homodimer. ScpA and ScpB bind to the head domain of Smc. The presence of the three proteins is required for the association of the complex with DNA.

Its subcellular location is the cytoplasm. Its function is as follows. A conditionally essential component of the chromosome segregation machinery. Participates in chromosomal partition during cell division. Important for positioning of ParB-parS complexes (ori of replication) and of the ter replication site, as well as for segration of the ParB-parS complex and thus chromosome segregation. May act via the formation of a condensin-like complex containing Smc, ScpA and ScpB that pulls DNA away from mid-cell into both cell halves. This chain is Segregation and condensation protein A, found in Myxococcus xanthus (strain DK1622).